We begin with the raw amino-acid sequence, 152 residues long: Putative pre-16S rRNA nuclease (152 aa).

It belongs to the YqgF nuclease family.

Its subcellular location is the cytoplasm. In terms of biological role, could be a nuclease involved in processing of the 5'-end of pre-16S rRNA. In Sphingopyxis alaskensis (strain DSM 13593 / LMG 18877 / RB2256) (Sphingomonas alaskensis), this protein is Putative pre-16S rRNA nuclease.